The following is a 187-amino-acid chain: ECF RNA polymerase sigma factor SigK (187 aa).

The tract at residues Y30–Q96 is sigma-70 factor domain-2. The Interaction with polymerase core subunit RpoC signature appears at E53–Q56. Positions C133–N182 are sigma-70 factor domain-4. A DNA-binding region (H-T-H motif) is located at residues Y155–R174.

Belongs to the sigma-70 factor family. ECF subfamily. In terms of assembly, interacts transiently with the RNA polymerase catalytic core formed by RpoA, RpoB, RpoC and RpoZ (2 alpha, 1 beta, 1 beta' and 1 omega subunit) to form the RNA polymerase holoenzyme that can initiate transcription. Interacts (via sigma-70 factor domain 4) with anti-sigma-K factor RskA.

Its function is as follows. Sigma factors are initiation factors that promote the attachment of RNA polymerase to specific initiation sites and are then released. Extracytoplasmic function (ECF) sigma factors are held in an inactive form by an anti-sigma factor until released by regulated intramembrane proteolysis. This chain is ECF RNA polymerase sigma factor SigK (sigK), found in Mycobacterium ulcerans (strain Agy99).